A 637-amino-acid polypeptide reads, in one-letter code: Cell division cycle-related protein res1/sct1 (637 aa).

Positions 6–112 (IHKITYSGVE…YSGSAFMPMS (107 aa)) constitute an HTH APSES-type domain. The segment at residues 37–58 (ATQILKIAELDKPRRTRILEKF) is a DNA-binding region (H-T-H motif). The tract at residues 114-137 (FTPQSNRKPTEAYRRNSPVKKSFS) is disordered. ANK repeat units follow at residues 236–265 (DGHT…NVVA) and 357–386 (HGDT…SSSI).

In terms of assembly, DSC1 contains cdc10 and sct1/res1.

Its function is as follows. Acts as a positive regulator of the mitotic cell cycle and as a negative regulator of sexual differentiation. May be involved in the transcriptional regulation of the cdc22 and cdt1 genes. Is an integral component of the DSC1-like complex. The chain is Cell division cycle-related protein res1/sct1 (res1) from Schizosaccharomyces pombe (strain 972 / ATCC 24843) (Fission yeast).